A 547-amino-acid polypeptide reads, in one-letter code: Chaperonin GroEL (547 aa).

Residues Thr30–Pro33, Lys51, Asp87–Thr91, Gly416, Asn480–Ala482, and Asp496 contribute to the ATP site.

This sequence belongs to the chaperonin (HSP60) family. Forms a cylinder of 14 subunits composed of two heptameric rings stacked back-to-back. Interacts with the co-chaperonin GroES.

The protein localises to the cytoplasm. The enzyme catalyses ATP + H2O + a folded polypeptide = ADP + phosphate + an unfolded polypeptide.. Its function is as follows. Together with its co-chaperonin GroES, plays an essential role in assisting protein folding. The GroEL-GroES system forms a nano-cage that allows encapsulation of the non-native substrate proteins and provides a physical environment optimized to promote and accelerate protein folding. This chain is Chaperonin GroEL, found in Pseudoalteromonas translucida (strain TAC 125).